Here is a 749-residue protein sequence, read N- to C-terminus: MKYAASGLLSVALNSLLLLGSNQRFATQDVAPVWRGIAFGQSTDVNFATNVLPEKVGVNDVTINGKKLTVNDKADLSAPITIESRGGKIANTHDGLTFFYTQLPANVNFTLQSDVTVEQFGPESDAKPNAQEGAGLLVRDILGVPRQEPLKEGYEEFPAASNMVMNAIMTQDKKSKTEVKMQLISRNGVTQPWGNTNAEITRTSYQEKINLEQTPTFRLKLERTNDGFITAYAPKGSDQWVSKTVKGADLVTHQDKDHYYVGFFASRNAKITISNASLTTSPANTKPSAPFKAETTAPLLQVASSSLSTSDTYPVQARVNYNGTVEVFQNGKSLGKPQRVRAGDDFSLTTRLTQQKSDFKLVYIPSEGEDKTAKETSFSVEKITLADARNLYVSPEGKAGNDGSKNAPLDIKTAINALPGGGTLWLMDGDYSATVIPVSATQRKGMKTLMPVGKKAVFHGLQLNASYWKVKGIEITEKSFRIEGSHNQIERLLAHHCDNTGIQVSSSDNVGRPLWASHNLILNSESHSNQHPSKKDADGFAVKMRVGEGNVIRGAFSHDNVDDGFDLFNKIEDGPNGAVMIENSISLNNTSNGFKLGGEGQPVAHQVKNSIAIGNHMDGFSDNFNPGALQVSNNIALDNVRFNFIFRPSPYYGYEKQGIFKNNVSLRTQPGKYDDAVVGRLDASNYFIRIIERSTVRVRKSRRRITNPSRCQRSSAGMKKAACNWVIFCRRSNRHKTQRHRNRYPSTPA.

The N-terminal stretch at 1-26 (MKYAASGLLSVALNSLLLLGSNQRFA) is a signal peptide. Positions 538, 562, 563, and 566 each coordinate Ca(2+). Lysine 595 acts as the Proton acceptor in catalysis.

This sequence belongs to the polysaccharide lyase 9 family. It depends on Ca(2+) as a cofactor.

The protein resides in the secreted. It carries out the reaction [(1-&gt;4)-alpha-D-galacturonosyl](n) = 4-(4-deoxy-alpha-D-galact-4-enuronosyl)-D-galacturonate + [(1-&gt;4)-alpha-D-galacturonosyl](n-2). Its activity is regulated as follows. Activity on pectate is nearly completely inhibited by ethyleneglycol-bis-(P-aminoethyl ether) N,N'-tetraacetic acid (EGTA), EDTA or nitrilotriacetic acid. Activity is specifically restored by the addition of Ca(2+). In terms of biological role, exo-cleaving lyase that catalyzes the digestion of pectate. Contributes to pectate catabolism but not to bacterial virulence. In vitro can also use citrus pectin and highly methyl-esterified Link pectin as substrates. This chain is Pectate disaccharide-lyase, found in Dickeya chrysanthemi (Pectobacterium chrysanthemi).